The chain runs to 188 residues: UPF0157 protein DR_2534 (188 aa).

A compositionally biased stretch (gly residues) spans 1-12 (MGRGGRGVGGGR). The tract at residues 1–37 (MGRGGRGVGGGRPEGHGASVEGGRTRQTEGMDLISPD) is disordered.

The protein belongs to the UPF0157 (GrpB) family.

The sequence is that of UPF0157 protein DR_2534 from Deinococcus radiodurans (strain ATCC 13939 / DSM 20539 / JCM 16871 / CCUG 27074 / LMG 4051 / NBRC 15346 / NCIMB 9279 / VKM B-1422 / R1).